A 170-amino-acid polypeptide reads, in one-letter code: Probable chemoreceptor glutamine deamidase CheD (170 aa).

This sequence belongs to the CheD family.

It carries out the reaction L-glutaminyl-[protein] + H2O = L-glutamyl-[protein] + NH4(+). Functionally, probably deamidates glutamine residues to glutamate on methyl-accepting chemotaxis receptors (MCPs), playing an important role in chemotaxis. The protein is Probable chemoreceptor glutamine deamidase CheD of Maridesulfovibrio salexigens (strain ATCC 14822 / DSM 2638 / NCIMB 8403 / VKM B-1763) (Desulfovibrio salexigens).